The following is an 830-amino-acid chain: Scavenger receptor class F member 1 (830 aa).

Positions 1-19 are cleaved as a signal peptide; sequence MGLGLLLPLLLLWTRGTQG. Residues 20 to 421 lie on the Extracellular side of the membrane; the sequence is SELDPKGQHV…CQPGSGSRDT (402 aa). EGF-like domains follow at residues 53–87, 95–130, 155–191, and 215–249; these read TIPI…AHCS, WGPD…ARCE, WSST…RRCS, and WGPE…ARCE. Intrachain disulfides connect Cys-57–Cys-69, Cys-63–Cys-75, Cys-77–Cys-86, Cys-99–Cys-111, Cys-105–Cys-118, Cys-120–Cys-129, Cys-159–Cys-172, Cys-165–Cys-179, Cys-181–Cys-190, Cys-219–Cys-230, Cys-225–Cys-237, and Cys-239–Cys-248. Asn-289 carries an N-linked (GlcNAc...) asparagine glycan. 2 consecutive EGF-like domains span residues 302 to 339 and 351 to 382; these read FGES…PRCE and CGST…PSCN. 6 disulfides stabilise this stretch: Cys-306/Cys-319, Cys-313/Cys-326, Cys-329/Cys-338, Cys-355/Cys-363, Cys-358/Cys-370, and Cys-372/Cys-381. N-linked (GlcNAc...) asparagine glycans are attached at residues Asn-382 and Asn-393. A helical transmembrane segment spans residues 422–442; sequence ALIAGSLVPLLLLFLGLACCA. At 443–830 the chain is on the cytoplasmic side; that stretch reads CCCWAPRSDL…VVPISRPPEP (388 aa). 3 disordered regions span residues 516-539, 581-688, and 715-830; these read GWAT…PAYC, SLAR…SGPV, and FQKG…PPEP. Ser-589 and Ser-606 each carry phosphoserine. The segment covering 634-643 has biased composition (acidic residues); the sequence is ESTGPEEAEA. The span at 644–653 shows a compositional bias: low complexity; the sequence is PESFPAAASP.

As to quaternary structure, heterophilic interaction with SREC2 via its extracellular domain. The heterophilic interaction is suppressed by the presence of ligand such as Ac-LDL. Interacts with AVIL. As to expression, endothelial cells.

It localises to the membrane. Functionally, mediates the binding and degradation of acetylated low density lipoprotein (Ac-LDL). Mediates heterophilic interactions, suggesting a function as adhesion protein. Plays a role in the regulation of neurite-like outgrowth. This Homo sapiens (Human) protein is Scavenger receptor class F member 1 (SCARF1).